A 98-amino-acid polypeptide reads, in one-letter code: Citrate lyase acyl carrier protein (98 aa).

Serine 14 carries the O-(phosphoribosyl dephospho-coenzyme A)serine modification.

The protein belongs to the CitD family. As to quaternary structure, oligomer with a subunit composition of (alpha,beta,gamma)6.

It is found in the cytoplasm. Functionally, covalent carrier of the coenzyme of citrate lyase. This chain is Citrate lyase acyl carrier protein, found in Vibrio cholerae serotype O1 (strain ATCC 39541 / Classical Ogawa 395 / O395).